The chain runs to 147 residues: UPF0306 protein YhbP (147 aa).

It belongs to the UPF0306 family.

The sequence is that of UPF0306 protein YhbP from Escherichia coli (strain K12 / MC4100 / BW2952).